A 661-amino-acid chain; its full sequence is Meiotic coiled-coil protein 1 (661 aa).

5 coiled-coil regions span residues 38–78, 100–121, 143–184, 304–320, and 360–387; these read LDAL…IIEE, RAIYNTKKNEAKNMYKEIERLS, DIKL…LSIK, ELIQSMKQEIGNLEVDL, and LKRLQKDFQLLKAKLICALREWEEDNEK. Disordered regions lie at residues 410–446, 467–562, and 573–592; these read QNQENISSNDNSKSSPESSPPARKTTGKIENKKLRNI, LIDR…TPAS, and LSRTPPKGEFTNSLDDTPTQ. Residues 414-430 show a composition bias toward low complexity; it reads NISSNDNSKSSPESSPP. Positions 436-445 are enriched in basic and acidic residues; it reads GKIENKKLRN. Polar residues-rich tracts occupy residues 472-481, 548-562, and 582-592; these read VNQSPDTRSV, HNSVKLTGSSTTPAS, and FTNSLDDTPTQ.

The sequence is that of Meiotic coiled-coil protein 1 (mcp1) from Schizosaccharomyces pombe (strain 972 / ATCC 24843) (Fission yeast).